Consider the following 329-residue polypeptide: Cathepsin K (329 aa).

A signal peptide spans Met1–Ala15. Positions Leu16–Arg114 are cleaved as a propeptide — activation peptide. The N-linked (GlcNAc...) asparagine glycan is linked to Asn103. 2 cysteine pairs are disulfide-bonded: Cys136–Cys177 and Cys170–Cys210. The active site involves Cys139. Asn268 is a glycosylation site (N-linked (GlcNAc...) asparagine). Cys269 and Cys318 form a disulfide bridge. Active-site residues include His276 and Asn296.

The protein belongs to the peptidase C1 family. Predominantly expressed in osteclasts (bones).

It localises to the lysosome. It is found in the secreted. Its subcellular location is the apical cell membrane. It carries out the reaction Broad proteolytic activity. With small-molecule substrates and inhibitors, the major determinant of specificity is P2, which is preferably Leu, Met &gt; Phe, and not Arg.. Thiol protease involved in osteoclastic bone resorption and may participate partially in the disorder of bone remodeling. Displays potent endoprotease activity against fibrinogen at acid pH. May play an important role in extracellular matrix degradation. Involved in the release of thyroid hormone thyroxine (T4) by limited proteolysis of TG/thyroglobulin in the thyroid follicle lumen. In Oryctolagus cuniculus (Rabbit), this protein is Cathepsin K (CTSK).